A 113-amino-acid polypeptide reads, in one-letter code: Small ribosomal subunit protein bS6 (113 aa).

It belongs to the bacterial ribosomal protein bS6 family.

Binds together with bS18 to 16S ribosomal RNA. The sequence is that of Small ribosomal subunit protein bS6 from Ruthia magnifica subsp. Calyptogena magnifica.